The chain runs to 447 residues: Innexin-5 (447 aa).

4 helical membrane-spanning segments follow: residues 30-47 (TSTL…SQYV), 108-128 (QWIP…SIIW), 198-218 (ALYL…FWIL), and 283-303 (VYVF…CSLA). A disordered region spans residues 389 to 447 (KKDDDSALPASAPVDLQEDDDDDTPFPPPTKAVAETLTSDDEEEETDVDSPDTTATLPR). The segment covering 426–438 (TSDDEEEETDVDS) has biased composition (acidic residues).

The protein belongs to the pannexin family.

The protein resides in the cell membrane. The protein localises to the cell junction. It is found in the gap junction. In terms of biological role, structural component of the gap junctions. This chain is Innexin-5 (inx-5), found in Caenorhabditis elegans.